We begin with the raw amino-acid sequence, 263 residues long: Ubiquitin domain-containing protein 7SL RNA2 (263 aa).

In terms of domain architecture, Ubiquitin-like 1 spans 1-53; that stretch reads MNVDIDTETGSSFSITIDFGETVLQIKEKIEKSQGIPVSKQILYLDGKALEDD. Residues 74 to 93 form a disordered region; that stretch reads ADPNQSNEQTEQSKQIDDKK. The span at 76–86 shows a compositional bias: polar residues; it reads PNQSNEQTEQS. Residues 184–263 form the Ubiquitin-like 2 domain; it reads FTVHVKPYQE…GDTIELIREK (80 aa).

Belongs to the ubiquitin family. As to expression, expressed in seedlings, roots, stems, rosettes and flowers (at protein level).

Its subcellular location is the nucleus. In terms of biological role, controls phase transition from the vegetative to the reproductive state. Involved in the maintenance of the shoot apical meristem (SAM) thus preventing inflorescence meristem (IM) formation and subsequent inflorescence stem development during flowering. Regulates leaf and organ morphology. This chain is Ubiquitin domain-containing protein 7SL RNA2, found in Arabidopsis thaliana (Mouse-ear cress).